The sequence spans 418 residues: Glutamyl-tRNA(Gln) amidotransferase subunit D (418 aa).

The Asparaginase/glutaminase domain maps to 74-405; the sequence is KNISILSTGG…EDAKELMSKD (332 aa). Residues threonine 84, threonine 160, aspartate 161, and lysine 237 contribute to the active site.

The protein belongs to the asparaginase 1 family. GatD subfamily. Heterodimer of GatD and GatE.

It carries out the reaction L-glutamyl-tRNA(Gln) + L-glutamine + ATP + H2O = L-glutaminyl-tRNA(Gln) + L-glutamate + ADP + phosphate + H(+). Allows the formation of correctly charged Gln-tRNA(Gln) through the transamidation of misacylated Glu-tRNA(Gln) in organisms which lack glutaminyl-tRNA synthetase. The reaction takes place in the presence of glutamine and ATP through an activated gamma-phospho-Glu-tRNA(Gln). The GatDE system is specific for glutamate and does not act on aspartate. The sequence is that of Glutamyl-tRNA(Gln) amidotransferase subunit D from Methanococcus maripaludis (strain C7 / ATCC BAA-1331).